Here is a 225-residue protein sequence, read N- to C-terminus: 3-demethoxyubiquinol 3-hydroxylase (225 aa).

The span at 1 to 11 (MSVASTSSGFT) shows a compositional bias: polar residues. The interval 1–20 (MSVASTSSGFTPFSRRRGPL) is disordered. 6 residues coordinate Fe cation: E74, E104, H107, E156, E188, and H191. The interval 181–203 (VSQMKDDEAQHRASAERAGGVPL) is disordered. Over residues 184–195 (MKDDEAQHRASA) the composition is skewed to basic and acidic residues.

This sequence belongs to the COQ7 family. The cofactor is Fe cation.

It is found in the cell membrane. It catalyses the reaction a 5-methoxy-2-methyl-3-(all-trans-polyprenyl)benzene-1,4-diol + AH2 + O2 = a 3-demethylubiquinol + A + H2O. Its pathway is cofactor biosynthesis; ubiquinone biosynthesis. Functionally, catalyzes the hydroxylation of 2-nonaprenyl-3-methyl-6-methoxy-1,4-benzoquinol during ubiquinone biosynthesis. This chain is 3-demethoxyubiquinol 3-hydroxylase, found in Bordetella petrii (strain ATCC BAA-461 / DSM 12804 / CCUG 43448).